The sequence spans 185 residues: Ribosome-recycling factor (185 aa).

The protein belongs to the RRF family.

The protein resides in the cytoplasm. Its function is as follows. Responsible for the release of ribosomes from messenger RNA at the termination of protein biosynthesis. May increase the efficiency of translation by recycling ribosomes from one round of translation to another. In Actinobacillus pleuropneumoniae serotype 5b (strain L20), this protein is Ribosome-recycling factor.